The chain runs to 406 residues: 3-isopropylmalate dehydrogenase, chloroplastic (406 aa).

The N-terminal 34 residues, 1–34 (MAAALQTNIRPVKFPATLRALTKQSSPAPFRVRC), are a transit peptide targeting the chloroplast. Ser-71 carries the post-translational modification Phosphoserine. NAD(+) is bound at residue 117–130 (GYKWDKNEKHLKPE). 4 residues coordinate substrate: Arg-137, Arg-147, Arg-175, and Asp-265. 3 residues coordinate Mg(2+): Asp-265, Asp-289, and Asp-293. 323 to 335 (GSAPDIAGQDKAN) is a binding site for NAD(+).

The protein belongs to the isocitrate and isopropylmalate dehydrogenases family. Homodimer. Requires Mg(2+) as cofactor. It depends on Mn(2+) as a cofactor.

The protein resides in the plastid. The protein localises to the chloroplast. It catalyses the reaction (2R,3S)-3-isopropylmalate + NAD(+) = 4-methyl-2-oxopentanoate + CO2 + NADH. It functions in the pathway amino-acid biosynthesis; L-leucine biosynthesis; L-leucine from 3-methyl-2-oxobutanoate: step 3/4. Functionally, catalyzes the oxidation of 3-carboxy-2-hydroxy-4-methylpentanoate (3-isopropylmalate) to 3-carboxy-4-methyl-2-oxopentanoate. The product decarboxylates to 4-methyl-2 oxopentanoate. In Brassica napus (Rape), this protein is 3-isopropylmalate dehydrogenase, chloroplastic.